A 656-amino-acid chain; its full sequence is Fidgetin-like protein 1 (656 aa).

Residues 293-302 show a composition bias toward polar residues; the sequence is KYSNQPQRNP. The segment at 293-354 is disordered; it reads KYSNQPQRNP…QGNSEMNAPS (62 aa). Residues 331–340 show a composition bias toward basic and acidic residues; it reads RQEDVQDSNR. ATP-binding positions include A386 and 426–431; that span reads GTGKTL.

The protein belongs to the AAA ATPase family. Hexamer. Mg(2+) serves as cofactor.

It is found in the nucleus. The protein localises to the cytoplasm. The protein resides in the perinuclear region. It carries out the reaction ATP + H2O = ADP + phosphate + H(+). Functionally, may be involved in DNA double-strand break (DBS) repair via homologous recombination (HR). May regulate osteoblast proliferation and differentiation. In Xenopus tropicalis (Western clawed frog), this protein is Fidgetin-like protein 1 (fignl1).